Reading from the N-terminus, the 210-residue chain is Inner membrane-spanning protein YciB (210 aa).

6 consecutive transmembrane segments (helical) span residues 12-32 (EVSP…FFFA), 53-73 (IFIA…VSWM), 78-98 (LPMM…LTLW), 115-135 (LFGA…GYVF), 153-173 (WGVF…SFST), and 175-195 (FWVA…TLAQ).

This sequence belongs to the YciB family.

Its subcellular location is the cell inner membrane. Its function is as follows. Plays a role in cell envelope biogenesis, maintenance of cell envelope integrity and membrane homeostasis. This is Inner membrane-spanning protein YciB from Sinorhizobium medicae (strain WSM419) (Ensifer medicae).